The sequence spans 333 residues: Glycerol-3-phosphate dehydrogenase [NAD(P)+] (333 aa).

Residues serine 10, phenylalanine 11, arginine 31, and lysine 105 each contribute to the NADPH site. Sn-glycerol 3-phosphate-binding residues include lysine 105, glycine 136, and serine 138. Residue alanine 140 participates in NADPH binding. Residues lysine 191, aspartate 244, serine 254, arginine 255, and asparagine 256 each contribute to the sn-glycerol 3-phosphate site. The Proton acceptor role is filled by lysine 191. Residue arginine 255 coordinates NADPH. NADPH is bound by residues valine 279 and glutamate 281.

It belongs to the NAD-dependent glycerol-3-phosphate dehydrogenase family.

Its subcellular location is the cytoplasm. It catalyses the reaction sn-glycerol 3-phosphate + NAD(+) = dihydroxyacetone phosphate + NADH + H(+). The enzyme catalyses sn-glycerol 3-phosphate + NADP(+) = dihydroxyacetone phosphate + NADPH + H(+). It functions in the pathway membrane lipid metabolism; glycerophospholipid metabolism. Its function is as follows. Catalyzes the reduction of the glycolytic intermediate dihydroxyacetone phosphate (DHAP) to sn-glycerol 3-phosphate (G3P), the key precursor for phospholipid synthesis. The chain is Glycerol-3-phosphate dehydrogenase [NAD(P)+] from Leptospira biflexa serovar Patoc (strain Patoc 1 / Ames).